A 300-amino-acid polypeptide reads, in one-letter code: Merozoite surface protein 2 (300 aa).

Residues 1–20 (MKVIKTLSIINFFIFVTFNI) form the signal peptide. N-linked (GlcNAc...) asparagine glycosylation is found at Asn22 and Asn36. The polymorphic region stretch occupies residues 44 to 226 (EESKPPTGAV…EQTESPELQS (183 aa)). A 1; inverted repeat occupies 51-58 (GAVAGSGA). The 7 X 8 AA tandem repeats of G-S-G-A-G-A-V-A stretch occupies residues 51–110 (GAVAGSGAGAGSGAGAVAGSGAGAVAGSGAGAVAGSGAGAVAGSGAGAVAGSGAVAGSGA). Tandem repeats lie at residues 61-68 (GSGAGAVA), 69-76 (GSGAGAVA), 77-84 (GSGAGAVA), 85-92 (GSGAGAVA), and 93-100 (GSGAGAVA). One copy of the 7; inverted repeat lies at 103-110 (GAVAGSGA). The segment at 111–261 (GNGANPGADA…DSQKECTDGN (151 aa)) is disordered. The span at 123-148 (SPSTPATTTTTTTTNDAEASTSTSSE) shows a compositional bias: low complexity. The segment covering 149 to 165 (NRNHNNAETNPKGKGEV) has biased composition (basic and acidic residues). Composition is skewed to polar residues over residues 167 to 193 (KPNQ…NVPR) and 200 to 228 (KSPT…QSAP). Asn177 carries an N-linked (GlcNAc...) asparagine glycan. Residue Asn249 is glycosylated (N-linked (GlcNAc...) asparagine). A disulfide bridge connects residues Cys257 and Cys265. N-linked (GlcNAc...) asparagine glycans are attached at residues Asn273 and Asn274. Asn274 carries the GPI-anchor amidated asparagine lipid modification. A propeptide spans 275–300 (SSNIASINKFVVLISATLVLSFAIFI) (removed in mature form).

It localises to the cell membrane. In terms of biological role, may play a role in the merozoite attachment to the erythrocyte. This chain is Merozoite surface protein 2, found in Plasmodium falciparum (isolate imr143).